Consider the following 430-residue polypeptide: MAFEFRLPDIGEGIHEGEIVKWFVKAGDTIEEDDVLAEVQNDKSVVEIPSPVSGTVEEVMVEEGTVAVVGDVIVKIDAPDAEDMQFKGHDDDSSSKEEPAKEEAPAEQAPVATQTEEVDENRTVKAMPSVRKYAREKGVNIKAVSGSGKNGRITKEDVDAYLNGGAPTASNESADSATNEEVAETPAAPAAVSLEGDFPETTEKIPAMRRAIAKAMVNSKHTAPHVTLMDEIDVQALWDHRKKFKEIAAEQGTKLTFLPYVVKALVSALKKYPALNTSFNEEAGEIVHKHYWNIGIAADTDRGLLVPVVKHADRKSIFQISDEINELAVKARDGKLTADEMKGATCTISNIGSAGGQWFTPVINHPEVAILGIGRIAQKPIVKDGEIVAAPVLALSLSFDHRQIDGATGQNAMNHIKRLLNNPELLLMEG.

The Lipoyl-binding domain occupies 2–77 (AFEFRLPDIG…VVGDVIVKID (76 aa)). Residue K43 is modified to N6-lipoyllysine. A disordered region spans residues 80 to 122 (DAEDMQFKGHDDDSSSKEEPAKEEAPAEQAPVATQTEEVDENR). Residues 84-104 (MQFKGHDDDSSSKEEPAKEEA) show a composition bias toward basic and acidic residues. Residues 125–162 (KAMPSVRKYAREKGVNIKAVSGSGKNGRITKEDVDAYL) form the Peripheral subunit-binding (PSBD) domain. Residues 164–200 (GGAPTASNESADSATNEEVAETPAAPAAVSLEGDFPE) are disordered. Residues 177–192 (ATNEEVAETPAAPAAV) are compositionally biased toward low complexity. H401 is a catalytic residue.

Belongs to the 2-oxoacid dehydrogenase family. In terms of assembly, forms a 24-polypeptide structural core with octahedral symmetry. (R)-lipoate serves as cofactor.

The enzyme catalyses N(6)-[(R)-dihydrolipoyl]-L-lysyl-[protein] + acetyl-CoA = N(6)-[(R)-S(8)-acetyldihydrolipoyl]-L-lysyl-[protein] + CoA. In terms of biological role, the pyruvate dehydrogenase complex catalyzes the overall conversion of pyruvate to acetyl-CoA and CO(2). It contains multiple copies of three enzymatic components: pyruvate dehydrogenase (E1), dihydrolipoamide acetyltransferase (E2) and lipoamide dehydrogenase (E3). In Staphylococcus aureus, this protein is Dihydrolipoyllysine-residue acetyltransferase component of pyruvate dehydrogenase complex (pdhC).